A 261-amino-acid polypeptide reads, in one-letter code: Carbonic anhydrase 1 (261 aa).

At Ala-2 the chain carries N-acetylalanine. Positions 4–261 constitute an Alpha-carbonic anhydrase domain; it reads PDWGYDDKNG…LKGRTVRASF (258 aa). The Proton donor/acceptor role is filled by His-65. Zn(2+)-binding residues include His-95, His-97, and His-120. Residues Thr-200 and 200-201 contribute to the substrate site; that span reads TH. The segment at 238-261 is disordered; it reads NPVPIQRNNRPTQPLKGRTVRASF.

It belongs to the alpha-carbonic anhydrase family. Requires Zn(2+) as cofactor.

The protein localises to the cytoplasm. It carries out the reaction hydrogencarbonate + H(+) = CO2 + H2O. The enzyme catalyses urea = cyanamide + H2O. Its activity is regulated as follows. Inhibited by acetazolamide. Functionally, catalyzes the reversible hydration of carbon dioxide. Can hydrate cyanamide to urea. The sequence is that of Carbonic anhydrase 1 (CA1) from Macaca mulatta (Rhesus macaque).